The sequence spans 4513 residues: Dynein-1-beta heavy chain, flagellar inner arm I1 complex (4513 aa).

The interval 1–1806 (MEPGDEGKGH…IVKQVLSVFY (1806 aa)) is stem. 3 coiled-coil regions span residues 192-223 (KAAAKQKDLVQRLESTIIHWTRQVKELLNQQD), 1544-1577 (TAQGLLESFQDMNNKLERIQKSLDNYLENKRQQF), and 1704-1727 (THECEKALADADSARKNLKLLKKK). AAA regions lie at residues 1807–2028 (YGYE…PIAR), 2089–2350 (RAIE…VPEN), 2458–2706 (FKPA…IIQG), and 2808–3059 (DYAL…LKRR). ATP is bound by residues 1845–1852 (GPAGTGKT), 2127–2134 (GRTGSGKS), 2497–2504 (GNVGVGKT), and 2848–2855 (GVGGSGRK). Coiled-coil stretches lie at residues 3107-3193 (AAMK…LTKK), 3301-3384 (KRAK…SISE), and 3499-3519 (RLKVLNLQMSDMARQIENAIQ). Residues 3107–3384 (AAMKKVAEEK…RVRWEASISE (278 aa)) form a stalk region. 2 AAA regions span residues 3443–3674 (LANP…EVNA) and 3890–4109 (ATTY…LLKS).

In terms of assembly, the I1 inner arm complex (also known as the f dynein complex) is a two-headed isoform composed of two heavy chains (1-alpha and 1-beta), three intermediate chains and three light chains. I1 occupies a specific position proximal to the first radial spoke and repeats every 96 nm along the length of the axoneme.

It is found in the cell projection. Its subcellular location is the cilium. The protein localises to the flagellum. The protein resides in the cytoplasm. It localises to the cytoskeleton. It is found in the flagellum axoneme. In terms of biological role, force generating protein of eukaryotic cilia and flagella. Produces force towards the minus ends of microtubules. Dynein has ATPase activity; the force-producing power stroke is thought to occur on release of ADP. Required for assembly of the I1 inner arm complex and its targeting to the appropriate axoneme location. Also required for phototaxis. The sequence is that of Dynein-1-beta heavy chain, flagellar inner arm I1 complex (DHC10) from Chlamydomonas reinhardtii (Chlamydomonas smithii).